A 704-amino-acid polypeptide reads, in one-letter code: Chloride intracellular channel protein 6 (704 aa).

Positions 1–13 (MAEAAEPEGVAPG) are enriched in low complexity. Residues 1 to 446 (MAEAAEPEGV…EDGEASEPRA (446 aa)) are disordered. Positions 39–48 (EGPEGSEGAE) are enriched in acidic residues. A Phosphoserine modification is found at serine 44. Residues 67–83 (RGPEAEARGTRGAHGET) show a composition bias toward basic and acidic residues. Low complexity predominate over residues 90–100 (PEGAEVPQGGE). Over residues 121–147 (PRGEAQREPEDSAAPERQEEAEQRPEV) the composition is skewed to basic and acidic residues. 13 tandem repeats follow at residues 157 to 166 (GDSVDAEGPL), 167 to 176 (GDNIEAEGPA), 177 to 186 (GDSVEAEGRV), 187 to 196 (GDSVDAEGPA), 197 to 206 (GDSVDAEGPL), 207 to 216 (GDNIQAEGPA), 217 to 226 (GDSVDAEGRV), 227 to 236 (GDSVDAEGPA), 237 to 246 (GDSVDAEGRV), 247 to 256 (GDSVEAGDPA), 257 to 266 (GDGVEAGVPA), 267 to 276 (GDSVEAEGPA), and 277 to 286 (GDSMDAEGPA). Positions 157–282 (GDSVDAEGPL…EGPAGDSMDA (126 aa)) are 13 X 10 AA tandem repeat of G-D-[SNG]-[VIM]-[DEQ]-A-[EAG]-[GDVE]-[PRG]-[LAVP]. Polar residues predominate over residues 295 to 306 (EPQQSGDGSLSP). 2 stretches are compositionally biased toward basic and acidic residues: residues 350–360 (ARADAGEDRVG) and 371–385 (EERR…REEE). Residues serine 397 and serine 442 each carry the phosphoserine modification. Positions 434 to 446 (GRREDGEASEPRA) are enriched in basic and acidic residues. The G-site signature appears at 487 to 490 (CPFS). The chain crosses the membrane as a helical span at residues 489–509 (FSQRLFMILWLKGVIFNVTTV). One can recognise a GST C-terminal domain in the interval 556-704 (YPKLGTQHPE…AYSDVAKRMK (149 aa)).

Belongs to the chloride channel CLIC family. In terms of assembly, monomer (soluble state). Interacts with dopamine receptors DRD2, DRD3 and DRD4. In terms of processing, phosphorylated. In terms of tissue distribution, expressed in brain, placenta, pancreas, liver, lung, heart, kidney, liver, spleen, soleus muscle, and brown fat.

It is found in the cytoplasm. The protein resides in the cell membrane. The catalysed reaction is chloride(in) = chloride(out). With respect to regulation, channel activity is redox- and pH-regulated. Inhibited by IAA-94. Its function is as follows. In the soluble state, catalyzes glutaredoxin-like thiol disulfide exchange reactions with reduced glutathione as electron donor. Can insert into membranes and form voltage-dependent chloride-selective channels. The channel opens upon membrane depolarization at positive voltages and closes at negative membrane voltages. May play a critical role in water-secreting cells, possibly through the regulation of chloride ion transport. The sequence is that of Chloride intracellular channel protein 6 from Homo sapiens (Human).